Consider the following 664-residue polypeptide: Glycine--tRNA ligase beta subunit (664 aa).

It belongs to the class-II aminoacyl-tRNA synthetase family. As to quaternary structure, tetramer of two alpha and two beta subunits.

The protein resides in the cytoplasm. It catalyses the reaction tRNA(Gly) + glycine + ATP = glycyl-tRNA(Gly) + AMP + diphosphate. The sequence is that of Glycine--tRNA ligase beta subunit from Rickettsia africae (strain ESF-5).